A 293-amino-acid chain; its full sequence is MQRARPALWAAALIALALLRGPPAARAGSGAAGTGPVVRCEPCDARALAQCAPPPAAPPCAELVREPGCGCCLTCALREGQACGVYTERCGAGLRCQPPPGEPRPLQALLDGRGICANASAAGRLRAYLLPAPPAPGNGSESEEDRSVDSMENQALPSTHRVPDSKLHSVHTKMDVIKKGHAKDSQRYKVDYESQSTDTQNFSSESKRETEYGPCRREMEDTLNHLKFLNMLSPRGIHIPNCDKKGFYKKKQCRPSKGRKRGFCWCVDKYGQPLPGFDVKGKGDVHCYSMESK.

An N-terminal signal peptide occupies residues Met-1 to Ala-27. Residues Pro-36–Ala-119 enclose the IGFBP N-terminal domain. Cystine bridges form between Cys-40-Cys-69, Cys-43-Cys-71, Cys-51-Cys-72, Cys-60-Cys-75, Cys-83-Cys-96, and Cys-90-Cys-116. Residues Asn-118 and Asn-138 are each glycosylated (N-linked (GlcNAc...) asparagine). Disordered regions lie at residues Ala-132–Lys-166 and Lys-178–Gly-213. A Phosphoserine modification is found at Ser-150. The segment covering Lys-178–Tyr-192 has biased composition (basic and acidic residues). The span at Glu-193–Ser-204 shows a compositional bias: polar residues. The N-linked (GlcNAc...) asparagine glycan is linked to Asn-201. Position 203 is a phosphoserine (Ser-203). In terms of domain architecture, Thyroglobulin type-1 spans Tyr-212–Cys-287. Disulfide bonds link Cys-215–Cys-242, Cys-253–Cys-264, and Cys-266–Cys-287.

As to quaternary structure, interacts with XLKD1. Binds IGF2 more than IGF1. Forms a ternary complex of about 140 to 150 kDa with IGF1 or IGF2 and a 85 kDa glycoprotein (ALS). Interacts with humanin; humanin competes with importin KPNB1 for binding to IGFBP3, blocking IGFBP3 nuclear import and IGFBP3-mediated apoptosis. Interacts with TMEM219. Interacts with RXRA; this interaction modulates the transcriptional activity of RXRA. Interacts with LRP1; this interaction mediates cell growth inhibition independent of IGF1. In terms of processing, phosphorylated by FAM20C in the extracellular medium. Phosphorylated by CK2; resulting in decreased nuclear localization.

The protein resides in the secreted. The protein localises to the nucleus. Its function is as follows. Multifunctional protein that plays a critical role in regulating the availability of IGFs such as IGF1 and IGF2 to their receptors and thereby regulates IGF-mediated cellular processes including proliferation, differentiation, and apoptosis in a cell-type specific manner. Also exhibits IGF-independent antiproliferative and apoptotic effects mediated by its receptor TMEM219/IGFBP-3R. Inhibits the positive effect of humanin on insulin sensitivity. Promotes testicular germ cell apoptosis. Acts via LRP-1/alpha2M receptor, also known as TGF-beta type V receptor, to mediate cell growth inhibition independent of IGF1. Mechanistically, induces serine-specific dephosphorylation of IRS1 or IRS2 upon ligation to its receptor, leading to the inhibitory cascade. In the nucleus, interacts with transcription factors such as retinoid X receptor-alpha/RXRA to regulate transcriptional signaling and apoptosis. The protein is Insulin-like growth factor-binding protein 3 (IGFBP3) of Sus scrofa (Pig).